The chain runs to 357 residues: MNISSFSDNLTKILGKYEDLSEKLSSGIGGEEFVKASKEYADLEDIVQKIKEYNKAKAELEEANNFKQEPSLDKATLEMIEEEIRNLEDSLPTLERSVKIALLPKDEADSKSAIIEIRAGTGGEEAALFAAKLFNMYQRYAELKGWRFEILSIDETGIGGYKEVSASIKGKDVFSKLKFESGVHRVQRVPETESQGRIHTSAATVAVLPEVEDVDIKLEEKDLRIDTYRASGAGGQHVNTTDSAVRITHIPTGITVALQDEKSQHKNKAKALKILRARIYEEERRKKDQERANNRRKQIGSGDRSERIRTYNFPQGRVSDHRINLTLYKIDEVINGQLDEFIEALIANDEAKKLSDI.

An N5-methylglutamine modification is found at glutamine 236. Positions arginine 284–asparagine 293 are enriched in basic and acidic residues. A disordered region spans residues arginine 284–phenylalanine 313.

This sequence belongs to the prokaryotic/mitochondrial release factor family. Post-translationally, methylated by PrmC. Methylation increases the termination efficiency of RF1.

The protein localises to the cytoplasm. Functionally, peptide chain release factor 1 directs the termination of translation in response to the peptide chain termination codons UAG and UAA. In Rickettsia bellii (strain RML369-C), this protein is Peptide chain release factor 1.